The following is a 746-amino-acid chain: Catalase-peroxidase (746 aa).

Residues 1 to 20 (MSSDTSSSRPPQPDSGTASK) are compositionally biased toward polar residues. The disordered stretch occupies residues 1–42 (MSSDTSSSRPPQPDSGTASKSESENPAIPSPKPKAHAPLTNR). A cross-link (tryptophyl-tyrosyl-methioninium (Trp-Tyr) (with M-262)) is located at residues 113-236 (WHAAGTYRIH…YGATTMGLIY (124 aa)). His114 functions as the Proton acceptor in the catalytic mechanism. The tryptophyl-tyrosyl-methioninium (Tyr-Met) (with W-113) cross-link spans 236-262 (YVNPEGPEGKPDPIAAAIDIRETFGRM). His277 serves as a coordination point for heme b.

This sequence belongs to the peroxidase family. Peroxidase/catalase subfamily. Homodimer or homotetramer. Heme b is required as a cofactor. Formation of the three residue Trp-Tyr-Met cross-link is important for the catalase, but not the peroxidase activity of the enzyme.

It carries out the reaction H2O2 + AH2 = A + 2 H2O. The catalysed reaction is 2 H2O2 = O2 + 2 H2O. Bifunctional enzyme with both catalase and broad-spectrum peroxidase activity. May play a role in the intracellular survival of mycobacteria. The polypeptide is Catalase-peroxidase (Mycobacterium intracellulare).